The chain runs to 120 residues: NAD(P)H-quinone oxidoreductase subunit 3, chloroplastic (120 aa).

3 consecutive transmembrane segments (helical) span residues 9–29 (IFWA…LISG), 64–84 (MFAL…PWAM), and 88–108 (VLGV…IVGS).

This sequence belongs to the complex I subunit 3 family. As to quaternary structure, NDH is composed of at least 16 different subunits, 5 of which are encoded in the nucleus.

The protein localises to the plastid. It is found in the chloroplast thylakoid membrane. The catalysed reaction is a plastoquinone + NADH + (n+1) H(+)(in) = a plastoquinol + NAD(+) + n H(+)(out). The enzyme catalyses a plastoquinone + NADPH + (n+1) H(+)(in) = a plastoquinol + NADP(+) + n H(+)(out). In terms of biological role, NDH shuttles electrons from NAD(P)H:plastoquinone, via FMN and iron-sulfur (Fe-S) centers, to quinones in the photosynthetic chain and possibly in a chloroplast respiratory chain. The immediate electron acceptor for the enzyme in this species is believed to be plastoquinone. Couples the redox reaction to proton translocation, and thus conserves the redox energy in a proton gradient. The sequence is that of NAD(P)H-quinone oxidoreductase subunit 3, chloroplastic from Platanus occidentalis (Sycamore).